Reading from the N-terminus, the 107-residue chain is Small ribosomal subunit protein uS17 (107 aa).

It belongs to the universal ribosomal protein uS17 family. As to quaternary structure, part of the 30S ribosomal subunit.

Its function is as follows. One of the primary rRNA binding proteins, it binds specifically to the 5'-end of 16S ribosomal RNA. This Thermotoga maritima (strain ATCC 43589 / DSM 3109 / JCM 10099 / NBRC 100826 / MSB8) protein is Small ribosomal subunit protein uS17.